Consider the following 473-residue polypeptide: Photosystem II CP43 reaction center protein (473 aa).

A propeptide spanning residues 1-14 (MKTLYSLRRFYHVE) is cleaved from the precursor. An N-acetylthreonine modification is found at threonine 15. At threonine 15 the chain carries Phosphothreonine. 5 helical membrane-spanning segments follow: residues 69 to 93 (LFEV…PHLA), 134 to 155 (LLGP…KDRN), 178 to 200 (KALY…RKIT), 255 to 275 (KPFA…LSYS), and 291 to 312 (WFNN…ASQA). A [CaMn4O5] cluster-binding site is contributed by glutamate 367. A helical transmembrane segment spans residues 447–471 (RARAAAAGFEKGIDRDFEPVLSMTP).

This sequence belongs to the PsbB/PsbC family. PsbC subfamily. PSII is composed of 1 copy each of membrane proteins PsbA, PsbB, PsbC, PsbD, PsbE, PsbF, PsbH, PsbI, PsbJ, PsbK, PsbL, PsbM, PsbT, PsbX, PsbY, PsbZ, Psb30/Ycf12, at least 3 peripheral proteins of the oxygen-evolving complex and a large number of cofactors. It forms dimeric complexes. The cofactor is Binds multiple chlorophylls and provides some of the ligands for the Ca-4Mn-5O cluster of the oxygen-evolving complex. It may also provide a ligand for a Cl- that is required for oxygen evolution. PSII binds additional chlorophylls, carotenoids and specific lipids..

The protein localises to the plastid. It localises to the chloroplast thylakoid membrane. Functionally, one of the components of the core complex of photosystem II (PSII). It binds chlorophyll and helps catalyze the primary light-induced photochemical processes of PSII. PSII is a light-driven water:plastoquinone oxidoreductase, using light energy to abstract electrons from H(2)O, generating O(2) and a proton gradient subsequently used for ATP formation. In Phaseolus vulgaris (Kidney bean), this protein is Photosystem II CP43 reaction center protein.